A 115-amino-acid chain; its full sequence is NADH-ubiquinone oxidoreductase chain 3 (115 aa).

A run of 3 helical transmembrane segments spans residues 3–23 (LMLTLLTNTLLASLLVLIAFW), 55–75 (FFLVAITFLLFDLEIALLLPL), and 84–104 (LNTMLIMALILISLLAISLAY).

This sequence belongs to the complex I subunit 3 family. As to quaternary structure, core subunit of respiratory chain NADH dehydrogenase (Complex I) which is composed of 45 different subunits. Interacts with TMEM186. Interacts with TMEM242.

Its subcellular location is the mitochondrion inner membrane. The enzyme catalyses a ubiquinone + NADH + 5 H(+)(in) = a ubiquinol + NAD(+) + 4 H(+)(out). Core subunit of the mitochondrial membrane respiratory chain NADH dehydrogenase (Complex I) which catalyzes electron transfer from NADH through the respiratory chain, using ubiquinone as an electron acceptor. Essential for the catalytic activity of complex I. The protein is NADH-ubiquinone oxidoreductase chain 3 of Equus asinus (Donkey).